A 614-amino-acid chain; its full sequence is DNA mismatch repair protein MutL (614 aa).

This sequence belongs to the DNA mismatch repair MutL/HexB family.

Functionally, this protein is involved in the repair of mismatches in DNA. It is required for dam-dependent methyl-directed DNA mismatch repair. May act as a 'molecular matchmaker', a protein that promotes the formation of a stable complex between two or more DNA-binding proteins in an ATP-dependent manner without itself being part of a final effector complex. This is DNA mismatch repair protein MutL from Thermoanaerobacter pseudethanolicus (strain ATCC 33223 / 39E) (Clostridium thermohydrosulfuricum).